We begin with the raw amino-acid sequence, 341 residues long: L-threonine 3-dehydrogenase (341 aa).

Zn(2+) is bound at residue Cys38. Catalysis depends on charge relay system residues Thr40 and His43. Zn(2+) contacts are provided by His63, Glu64, Cys93, Cys96, Cys99, and Cys107. NAD(+) contacts are provided by residues Ile175, Asp195, Arg200, 262-264 (LGI), and 286-287 (IY).

The protein belongs to the zinc-containing alcohol dehydrogenase family. As to quaternary structure, homotetramer. It depends on Zn(2+) as a cofactor.

Its subcellular location is the cytoplasm. The enzyme catalyses L-threonine + NAD(+) = (2S)-2-amino-3-oxobutanoate + NADH + H(+). It participates in amino-acid degradation; L-threonine degradation via oxydo-reductase pathway; glycine from L-threonine: step 1/2. Catalyzes the NAD(+)-dependent oxidation of L-threonine to 2-amino-3-ketobutyrate. The sequence is that of L-threonine 3-dehydrogenase from Chromobacterium violaceum (strain ATCC 12472 / DSM 30191 / JCM 1249 / CCUG 213 / NBRC 12614 / NCIMB 9131 / NCTC 9757 / MK).